Consider the following 250-residue polypeptide: Ribose-5-phosphate isomerase A (250 aa).

Substrate contacts are provided by residues 33–36 (TGST), 89–92 (DGAD), and 102–105 (KGGG). Residue Glu111 is the Proton acceptor of the active site. Residue Lys129 coordinates substrate.

This sequence belongs to the ribose 5-phosphate isomerase family. Homodimer.

It catalyses the reaction aldehydo-D-ribose 5-phosphate = D-ribulose 5-phosphate. Its pathway is carbohydrate degradation; pentose phosphate pathway; D-ribose 5-phosphate from D-ribulose 5-phosphate (non-oxidative stage): step 1/1. Its function is as follows. Catalyzes the reversible conversion of ribose-5-phosphate to ribulose 5-phosphate. This chain is Ribose-5-phosphate isomerase A, found in Cereibacter sphaeroides (strain ATCC 17025 / ATH 2.4.3) (Rhodobacter sphaeroides).